We begin with the raw amino-acid sequence, 131 residues long: Snaclec A8 (131 aa).

Intrachain disulfides connect Cys2–Cys13, Cys30–Cys129, and Cys104–Cys121. Residues 9–130 (HEGHCYKVFN…CGQPYRFTCE (122 aa)) form the C-type lectin domain.

It belongs to the snaclec family. In terms of assembly, heterodimer; disulfide-linked. As to expression, expressed by the venom gland.

The protein localises to the secreted. Interferes with one step of hemostasis (modulation of platelet aggregation, or coagulation cascade, for example). The polypeptide is Snaclec A8 (Macrovipera lebetinus (Levantine viper)).